Here is a 249-residue protein sequence, read N- to C-terminus: Superoxide dismutase 1 copper chaperone (249 aa).

The region spanning 6–69 is the HMA domain; it reads TYEATYAIPM…TLRNCGKDAI (64 aa). H16 serves as a coordination point for Zn(2+). Positions 17 and 20 each coordinate Cu cation. C27 and C64 form a disulfide bridge. Residues C229 and C231 each contribute to the Cu cation site.

This sequence belongs to the CCS1 family. In terms of assembly, homodimer, and heterodimer with apo-SOD1. Zinc-binding at His-16 of CCS1 and 'Glu-43' of apo-SOD1 is required for this heterodimerization. Cu(2+) is required as a cofactor.

The protein localises to the cytoplasm. It localises to the mitochondrion intermembrane space. In terms of biological role, copper chaperone for apo superoxide dismutase 1 (SOD1). Binds copper ions and delivers them specifically to apo-SOD1. This chain is Superoxide dismutase 1 copper chaperone (CCS1), found in Saccharomyces cerevisiae (strain ATCC 204508 / S288c) (Baker's yeast).